The primary structure comprises 175 residues: Shikimate kinase (175 aa).

Residue 16–21 (GAGKST) participates in ATP binding. Ser20 contributes to the Mg(2+) binding site. Substrate is bound by residues Asp38, Arg62, and Gly84. Arg122 is a binding site for ATP. Arg141 lines the substrate pocket.

It belongs to the shikimate kinase family. As to quaternary structure, monomer. It depends on Mg(2+) as a cofactor.

The protein localises to the cytoplasm. It carries out the reaction shikimate + ATP = 3-phosphoshikimate + ADP + H(+). It participates in metabolic intermediate biosynthesis; chorismate biosynthesis; chorismate from D-erythrose 4-phosphate and phosphoenolpyruvate: step 5/7. Catalyzes the specific phosphorylation of the 3-hydroxyl group of shikimic acid using ATP as a cosubstrate. This chain is Shikimate kinase, found in Legionella pneumophila (strain Paris).